The sequence spans 177 residues: Adenine phosphoribosyltransferase (177 aa).

Belongs to the purine/pyrimidine phosphoribosyltransferase family. As to quaternary structure, homodimer.

The protein resides in the cytoplasm. It catalyses the reaction AMP + diphosphate = 5-phospho-alpha-D-ribose 1-diphosphate + adenine. It functions in the pathway purine metabolism; AMP biosynthesis via salvage pathway; AMP from adenine: step 1/1. Its function is as follows. Catalyzes a salvage reaction resulting in the formation of AMP, that is energically less costly than de novo synthesis. The protein is Adenine phosphoribosyltransferase of Chlorobium phaeobacteroides (strain DSM 266 / SMG 266 / 2430).